A 677-amino-acid polypeptide reads, in one-letter code: Bargin (677 aa).

2 stretches are compositionally biased toward low complexity: residues 1-13 (MDRG…TPAV) and 29-39 (APHAAAGPDGQ). 2 disordered regions span residues 1–39 (MDRG…PDGQ) and 168–190 (SQAT…HSHT). The BAR domain occupies 25–270 (EEAAAPHAAA…RENHGQADHS (246 aa)). 3 positions are modified to phosphoserine: serine 183, serine 270, and serine 272. The Rho-GAP domain occupies 284-477 (VSLATHLQEL…ALIQSADTLF (194 aa)). The interval 504–577 (SEELPSTAVP…DMARRSTGSL (74 aa)) is disordered. Positions 516–530 (ATTPAPAPAPAPAPA) are enriched in pro residues. 2 positions are modified to phosphoserine: serine 552 and serine 558. The tract at residues 574-677 (TGSLAAAVET…IADLTEGLED (104 aa)) is mediates non-covalent binding of poly-ubiquitin chains.

As to expression, expressed in brain (at protein level).

The protein resides in the cell membrane. It is found in the cytoplasm. It localises to the cytosol. In terms of biological role, GTPase activating protein (GAP) which specifically converts GTP-bound RAC1 and CDC42 in their inactive GDP-bound form. The GAP activity is enhanced by the non-covalent binding of K-29 and K-48 polyubiquitin chains. The polypeptide is Bargin (Homo sapiens (Human)).